Reading from the N-terminus, the 124-residue chain is Fluoride-specific ion channel FluC (124 aa).

The next 4 membrane-spanning stretches (helical) occupy residues 4-24, 35-55, 67-87, and 100-120; these read FVLV…LSGV, YGTV…WGIL, LLLL…TYEG, and ALYI…GAGL. Residues Gly75 and Thr78 each coordinate Na(+).

This sequence belongs to the fluoride channel Fluc/FEX (TC 1.A.43) family.

It is found in the cell inner membrane. The catalysed reaction is fluoride(in) = fluoride(out). Na(+) is not transported, but it plays an essential structural role and its presence is essential for fluoride channel function. Fluoride-specific ion channel. Important for reducing fluoride concentration in the cell, thus reducing its toxicity. This chain is Fluoride-specific ion channel FluC, found in Nitratidesulfovibrio vulgaris (strain ATCC 29579 / DSM 644 / CCUG 34227 / NCIMB 8303 / VKM B-1760 / Hildenborough) (Desulfovibrio vulgaris).